Reading from the N-terminus, the 746-residue chain is Protein C-mannosyl-transferase DPY19L1 (746 aa).

The segment at 1 to 68 (MVLQARSKHR…RAGTAAPAPD (68 aa)) is disordered. A phosphoserine mark is found at Ser28 and Ser31. Residues 59–68 (RAGTAAPAPD) are compositionally biased toward low complexity. The next 11 membrane-spanning stretches (helical) occupy residues 137–159 (LYYS…WMIM), 227–247 (ACFY…LFFI), 257–279 (LGGV…VMWT), 307–325 (LCRG…FMLP), 331–350 (FVLL…GYID), 357–374 (IIYM…LMFG), 380–396 (TSYY…MLAM), 405–425 (VSEL…TVIL), 481–501 (LLLP…FNDM), 520–540 (GELV…VLIM), and 562–582 (LFGW…ILAA).

This sequence belongs to the dpy-19 family.

The protein resides in the endoplasmic reticulum membrane. The enzyme catalyses L-tryptophyl-[protein] + a di-trans,poly-cis-dolichyl beta-D-mannosyl phosphate = C-alpha-D-mannosyl-L-tryptophyl-[protein] + a di-trans,poly-cis-dolichyl phosphate + H(+). It functions in the pathway protein modification; protein glycosylation. Functionally, C-mannosyltransferase that mediates the C-mannosylation tryptophan residues on target proteins. The reaction occurs on the luminal side of the endoplasmic reticulum and involves the transfer of a mannose unit from a dolichylphosphate mannose (Dol-P-Man) donor to an acceptor protein containing a WxxW consensus sequence. C-mannosylates the first two tryptophans in the WxxWxxWxxC sequence motif in thrombospondin (TSP) type-1 repeats of UNC5A. Regulates neurite extension during development. The polypeptide is Protein C-mannosyl-transferase DPY19L1 (Dpy19l1) (Mus musculus (Mouse)).